A 101-amino-acid polypeptide reads, in one-letter code: Enhancer of yellow 2 transcription factor (101 aa).

Belongs to the ENY2 family. In terms of assembly, component of the nuclear pore complex (NPC)-associated AMEX complex (anchoring and mRNA export complex), composed of at least e(y)2 and xmas-2. Component of the SAGA transcription coactivator-HAT complexes, at least composed of Ada2b, e(y)2, Pcaf/Gcn5, Taf10 and Nipped-A/Trrap. Within the SAGA complex, e(y)2, Sgf11, and not/nonstop form an additional subcomplex of SAGA called the DUB module (deubiquitination module). Component of the THO complex, composed of at least e(y)2, HPR1, THO2, THOC5, THOC6 and THOC7. Interacts with e(y)1. Interacts with su(Hw) (via zinc fingers). Interacts with xmas-2; required for localization to the nuclear periphery. Interacts with the nuclear pore complex (NPC).

Its subcellular location is the nucleus. It is found in the nucleoplasm. The protein resides in the cytoplasm. Functionally, involved in mRNA export coupled transcription activation by association with both the AMEX and the SAGA complexes. The SAGA complex is a multiprotein complex that activates transcription by remodeling chromatin and mediating histone acetylation and deubiquitination. Within the SAGA complex, participates in a subcomplex that specifically deubiquitinates histone H2B. The SAGA complex is recruited to specific gene promoters by activators, where it is required for transcription. Required for nuclear receptor-mediated transactivation. Involved in transcription elongation by recruiting the THO complex onto nascent mRNA. The AMEX complex functions in docking export-competent ribonucleoprotein particles (mRNPs) to the nuclear entrance of the nuclear pore complex (nuclear basket). AMEX participates in mRNA export and accurate chromatin positioning in the nucleus by tethering genes to the nuclear periphery. This Drosophila simulans (Fruit fly) protein is Enhancer of yellow 2 transcription factor.